The sequence spans 95 residues: Aspartyl/glutamyl-tRNA(Asn/Gln) amidotransferase subunit C (95 aa).

Residues A55 to V67 are compositionally biased toward basic and acidic residues. The tract at residues A55–T83 is disordered.

This sequence belongs to the GatC family. As to quaternary structure, heterotrimer of A, B and C subunits.

It catalyses the reaction L-glutamyl-tRNA(Gln) + L-glutamine + ATP + H2O = L-glutaminyl-tRNA(Gln) + L-glutamate + ADP + phosphate + H(+). It carries out the reaction L-aspartyl-tRNA(Asn) + L-glutamine + ATP + H2O = L-asparaginyl-tRNA(Asn) + L-glutamate + ADP + phosphate + 2 H(+). Its function is as follows. Allows the formation of correctly charged Asn-tRNA(Asn) or Gln-tRNA(Gln) through the transamidation of misacylated Asp-tRNA(Asn) or Glu-tRNA(Gln) in organisms which lack either or both of asparaginyl-tRNA or glutaminyl-tRNA synthetases. The reaction takes place in the presence of glutamine and ATP through an activated phospho-Asp-tRNA(Asn) or phospho-Glu-tRNA(Gln). The sequence is that of Aspartyl/glutamyl-tRNA(Asn/Gln) amidotransferase subunit C from Natranaerobius thermophilus (strain ATCC BAA-1301 / DSM 18059 / JW/NM-WN-LF).